Consider the following 328-residue polypeptide: Protein phosphatase 1 regulatory inhibitor subunit PPP1R7 homolog (328 aa).

13 LRR repeats span residues 13-36 (IGDS…VELP), 37-59 (PNLI…IAQL), 61-82 (TLKK…PLSH), 86-110 (LSDL…IFTK), 111-130 (LLVY…ISKA), 131-153 (SSTL…IEHL), 154-177 (HNLQ…NFTK), 179-196 (EELW…LCGL), 197-221 (KCIK…CVAL), 223-240 (ELYL…LSAL), 241-264 (VNLR…NLTK), 266-287 (EDLW…AVTG), and 289-312 (KEKL…VAAV).

Interacts with human protein phosphatase PPP1C.

Its function is as follows. Inhibitor of protein-phosphatase 1 (PP1). Binds to and inhibits PP1 activity. The chain is Protein phosphatase 1 regulatory inhibitor subunit PPP1R7 homolog from Arabidopsis thaliana (Mouse-ear cress).